Consider the following 304-residue polypeptide: Sulfate adenylyltransferase subunit 2 (304 aa).

This sequence belongs to the PAPS reductase family. CysD subfamily. Heterodimer composed of CysD, the smaller subunit, and CysN.

The enzyme catalyses sulfate + ATP + H(+) = adenosine 5'-phosphosulfate + diphosphate. It participates in sulfur metabolism; hydrogen sulfide biosynthesis; sulfite from sulfate: step 1/3. With CysN forms the ATP sulfurylase (ATPS) that catalyzes the adenylation of sulfate producing adenosine 5'-phosphosulfate (APS) and diphosphate, the first enzymatic step in sulfur assimilation pathway. APS synthesis involves the formation of a high-energy phosphoric-sulfuric acid anhydride bond driven by GTP hydrolysis by CysN coupled to ATP hydrolysis by CysD. The chain is Sulfate adenylyltransferase subunit 2 from Halorhodospira halophila (strain DSM 244 / SL1) (Ectothiorhodospira halophila (strain DSM 244 / SL1)).